Consider the following 680-residue polypeptide: ABC transporter B family member 24, mitochondrial (680 aa).

The transit peptide at 1–75 (MMRVSQLQLC…MFFSTSTSAP (75 aa)) directs the protein to the mitochondrion. The ABC transmembrane type-1 domain occupies 108–402 (VISAFACLVG…LGVVYSDTVQ (295 aa)). The next 6 helical transmembrane spans lie at 109–129 (ISAF…PFLF), 145–165 (NPYL…YGIA), 232–252 (AMVF…CILA), 255–275 (FGAV…AFTL), 340–360 (FALL…TAMV), and 376–396 (LVMV…LGVV). The region spanning 439 to 673 (ISFENVHFSY…SGRYAKLWTQ (235 aa)) is the ABC transporter domain. Residues Tyr-448 and 472–483 (GSSGSGKSTILR) each bind ATP.

This sequence belongs to the ABC transporter superfamily. ABCB family. Heavy Metal importer (TC 3.A.1.210) subfamily. In terms of assembly, homodimer. As to expression, mostly expressed at low levels in roots and flowers.

Its subcellular location is the mitochondrion inner membrane. Its function is as follows. Performs an essential function in the generation of cytoplasmic iron-sulfur proteins by mediating export of Fe/S cluster precursors synthesized by NFS1 and other mitochondrial proteins. Not involved in the export of cyclic pyranopterin monophosphate (cPMP) from mitochondria to the cytosol. The chain is ABC transporter B family member 24, mitochondrial (ABCB24) from Arabidopsis thaliana (Mouse-ear cress).